The following is a 2223-amino-acid chain: Sperm-associated antigen 17 (2223 aa).

Basic and acidic residues-rich tracts occupy residues 144-172 and 200-212; these read RENEKKVIEDKPKLEKDKGKAKSPKEKKA and RRGEDDHTNRYID. The disordered stretch occupies residues 144 to 214; the sequence is RENEKKVIED…DHTNRYIDDE (71 aa). Residues 266–295 adopt a coiled-coil conformation; sequence NQQQEVLLQSEDLEAEKLKKENAIKELKTF. 6 disordered regions span residues 387 to 416, 680 to 710, 731 to 762, 950 to 1015, 1179 to 1212, and 1345 to 1378; these read MPTSEAPQPAVPAPGKKKAQYEEPQAPPPV, MSVQDNESNREPSDPSQCDANNMKHSDLNNL, PQHESLEQTTNNEIKDDAVTKADSHEKKPKKM, EERL…EPKI, GKIKGKEKPKESLKEEEHPKEEEKKEEEVEPEPV, and ETIPSEITNTKKGKSHKSQSSMAHKGEIHDPPPE. Composition is skewed to basic and acidic residues over residues 743-756, 950-999, and 1182-1205; these read EIKDDAVTKADSHE, EERL…EQVK, and KGKEKPKESLKEEEHPKEEEKKEE. Residues 940 to 966 adopt a coiled-coil conformation; the sequence is WKEEQHRLAEEERLREEKKAEKKGKEA. Polar residues predominate over residues 1345–1354; that stretch reads ETIPSEITNT. Residues 1874–1907 adopt a coiled-coil conformation; sequence RHTASSKRWKEKIDKTRKEIETTQNYLMDIKNRI. Disordered stretches follow at residues 1938–1957 and 1962–2008; these read TKKNEDANETAVQDTSDLNL and HKVS…SYEP. The segment covering 1988 to 1998 has biased composition (polar residues); that stretch reads TAQNQTENLTK.

As to quaternary structure, interacts (via the C-terminus) with SPAG6; the interaction probably occurs on polymerized microtubules. As to expression, highly expressed in testis. Expressed in organs that contain cilia-bearing cells including brain, oviduct, lung, and uterus.

Its subcellular location is the cytoplasm. It localises to the cytoskeleton. The protein localises to the flagellum axoneme. It is found in the cytoplasmic vesicle. The protein resides in the secretory vesicle. Its subcellular location is the acrosome. It localises to the golgi apparatus. Functionally, component of the central pair apparatus of ciliary axonemes. Plays a critical role in the function and structure of motile cilia. May play a role in endochondral bone formation, most likely because of a function in primary cilia of chondrocytes and osteoblasts. Essential for normal spermatogenesis and male fertility. Required for normal manchette structure, transport of proteins along the manchette microtubules and formation of the sperm head and flagellum. Essential for sperm flagellum development and proper assembly of the respiratory motile cilia central pair apparatus, but not the brain ependymal cilia. The protein is Sperm-associated antigen 17 (SPAG17) of Homo sapiens (Human).